The primary structure comprises 180 residues: Large ribosomal subunit protein uL6 (180 aa).

This sequence belongs to the universal ribosomal protein uL6 family. As to quaternary structure, part of the 50S ribosomal subunit.

Its function is as follows. This protein binds to the 23S rRNA, and is important in its secondary structure. It is located near the subunit interface in the base of the L7/L12 stalk, and near the tRNA binding site of the peptidyltransferase center. This Anaeromyxobacter sp. (strain Fw109-5) protein is Large ribosomal subunit protein uL6.